A 167-amino-acid polypeptide reads, in one-letter code: Large ribosomal subunit protein uL10 (167 aa).

This sequence belongs to the universal ribosomal protein uL10 family. In terms of assembly, part of the ribosomal stalk of the 50S ribosomal subunit. The N-terminus interacts with L11 and the large rRNA to form the base of the stalk. The C-terminus forms an elongated spine to which L12 dimers bind in a sequential fashion forming a multimeric L10(L12)X complex.

Forms part of the ribosomal stalk, playing a central role in the interaction of the ribosome with GTP-bound translation factors. This chain is Large ribosomal subunit protein uL10, found in Chromohalobacter salexigens (strain ATCC BAA-138 / DSM 3043 / CIP 106854 / NCIMB 13768 / 1H11).